Consider the following 330-residue polypeptide: Flotillin-like protein FloA (330 aa).

The next 2 helical transmembrane spans lie at 5 to 25 (IILP…LFTF) and 28 to 48 (VALW…TLIG).

The protein belongs to the flotillin-like FloA family. Homooligomerizes.

The protein localises to the cell membrane. It localises to the membrane raft. Its function is as follows. Found in functional membrane microdomains (FMM) that may be equivalent to eukaryotic membrane rafts. FMMs are highly dynamic and increase in number as cells age. Flotillins are thought to be important factors in membrane fluidity. This chain is Flotillin-like protein FloA, found in Oceanobacillus iheyensis (strain DSM 14371 / CIP 107618 / JCM 11309 / KCTC 3954 / HTE831).